The sequence spans 1411 residues: Uveal autoantigen with coiled-coil domains and ankyrin repeats (1411 aa).

An N-acetylmethionine modification is found at methionine 1. Positions methionine 1–serine 30 are disordered. A compositionally biased stretch (low complexity) spans alanine 13–serine 30. 6 ANK repeats span residues glutamate 69–threonine 98, alanine 102–histidine 131, glutamine 135–alanine 164, aspartate 168–serine 197, glutamine 201–leucine 230, and leucine 234–lysine 263. The segment at lysine 263 to phenylalanine 301 is disordered. Serine 280 bears the Phosphoserine mark. The span at threonine 282–phenylalanine 301 shows a compositional bias: basic and acidic residues. Coiled-coil stretches lie at residues histidine 299 to lysine 379, serine 442 to leucine 624, and valine 652 to arginine 1380. The disordered stretch occupies residues glycine 1006–glutamate 1031.

In terms of assembly, component of the apoptosome complex, composed of APAF1, pro-caspase-9 and UACA. In the complex, it probably interacts directly with APAF1. Interacts with LGALS3, ARF6 and ACTB. Interacts with RAB39A. Highly expressed in heart, liver, kidney and testis. Weakly expressed in lung and skeletal muscle. Not expressed in brain and spleen.

It localises to the nucleus. The protein resides in the cytoplasm. Its subcellular location is the cytoskeleton. Functionally, regulates APAF1 expression and plays an important role in the regulation of stress-induced apoptosis. Promotes apoptosis by regulating three pathways, apoptosome up-regulation, LGALS3/galectin-3 down-regulation and NF-kappa-B inactivation. Regulates the redistribution of APAF1 into the nucleus after proapoptotic stress. Down-regulates the expression of LGALS3 by inhibiting NFKB1. Modulates isoactin dynamics to regulate the morphological alterations required for cell growth and motility. Interaction with ARF6 may modulate cell shape and motility after injury. May be involved in multiple neurite formation. The polypeptide is Uveal autoantigen with coiled-coil domains and ankyrin repeats (Uaca) (Mus musculus (Mouse)).